We begin with the raw amino-acid sequence, 147 residues long: Ribonuclease H (147 aa).

Positions 1–142 (MAGKVVMYTD…ADELANRGVR (142 aa)) constitute an RNase H type-1 domain. Mg(2+)-binding residues include D10, E48, D70, and D134.

Belongs to the RNase H family. In terms of assembly, monomer. The cofactor is Mg(2+).

The protein localises to the cytoplasm. It catalyses the reaction Endonucleolytic cleavage to 5'-phosphomonoester.. Endonuclease that specifically degrades the RNA of RNA-DNA hybrids. The sequence is that of Ribonuclease H from Marinobacter nauticus (strain ATCC 700491 / DSM 11845 / VT8) (Marinobacter aquaeolei).